A 305-amino-acid polypeptide reads, in one-letter code: Mitochondrial uncoupling protein 2 (305 aa).

3 Solcar repeats span residues 10 to 104, 114 to 205, and 214 to 297; these read ISFL…VKTL, IPLY…IKET, and DSVL…VKKV. 6 consecutive transmembrane segments (helical) span residues 16–36, 73–93, 120–140, 179–199, 220–240, and 270–290; these read FICS…LDTA, ISGL…YGGL, ILAA…TDLV, TGLG…LASY, LLAG…IDVV, and YKGF…MFLT.

Belongs to the mitochondrial carrier (TC 2.A.29) family.

It localises to the mitochondrion inner membrane. Functionally, PUMPS are mitochondrial transporter proteins that create proton leaks across the inner mitochondrial membrane, thus uncoupling oxidative phosphorylation. This leads to a decrease in the efficiency of oxidative phosphorylation and an increase in heat production. May be involved in protecting plant cells against oxidative stress damage. The polypeptide is Mitochondrial uncoupling protein 2 (PUMP2) (Arabidopsis thaliana (Mouse-ear cress)).